A 138-amino-acid polypeptide reads, in one-letter code: Rubber elongation factor protein (138 aa).

A2 is modified (N-acetylalanine).

It belongs to the REF/SRPP family. As to quaternary structure, in solution, able to form amyloid fibers and aggregates rich in beta-sheets. Interaction with membrane stabilizes the protein, inhibiting the amyloid state and aggregation. Post-translationally, not glycosylated. Localized in all laticifer layers.

It localises to the cytoplasm. Its function is as follows. May be part of the rubber biosynthesis machinery. Plays a role in rubber elongation. This is Rubber elongation factor protein from Hevea brasiliensis (Para rubber tree).